The primary structure comprises 643 residues: Immediate-early phosphoprotein 57 (643 aa).

2 disordered regions span residues 1 to 180 (MAQK…GGCA) and 194 to 329 (TGWG…QCPP). A compositionally biased stretch (acidic residues) spans 24–52 (LDFSESEEEEEEEESSSESESDEDSDMEV). 2 stretches are compositionally biased toward low complexity: residues 57-71 (QEAG…QPQQ) and 83-100 (QQPQ…QQQR). The segment covering 103–113 (KRGEESGDARP) has biased composition (basic and acidic residues). Positions 162–171 (QQPQSQAAQP) are enriched in low complexity. Positions 215 to 241 (RRGDEDRRSGRDRRRREGRERDRESRS) are enriched in basic and acidic residues. Residues 284 to 297 (AGPSQAQAAQAARA) are compositionally biased toward low complexity. The segment covering 298 to 307 (PRQEQGERRQ) has biased composition (basic and acidic residues). The span at 320–329 (QQCPPQQCPP) shows a compositional bias: pro residues.

Belongs to the herpesviridae UL69 family.

In Equus caballus (Horse), this protein is Immediate-early phosphoprotein 57 (57).